Here is a 741-residue protein sequence, read N- to C-terminus: Double-stranded RNA-specific editase 1 (741 aa).

Residues 1–79 (MDIEDEENMS…RRKTPGPVLP (79 aa)) are disordered. Serine 26 bears the Phosphoserine mark. Gly residues predominate over residues 33–49 (PGPGEGSQLSNGGGGGP). Residues 63 to 73 (SKYRLKKRRKT) are compositionally biased toward basic residues. The DRBM 1 domain occupies 78 to 144 (LPKNALMQLN…AEKALRSFVQ (67 aa)). Interaction with substrate RNA regions lie at residues 83–88 (LMQLNE) and 104–105 (VH). Serine 149 is subject to Phosphoserine. Positions 231–298 (PSGKNPVMIL…AQSALAAIFN (68 aa)) constitute a DRBM 2 domain. 2 interaction with substrate RNA regions span residues 237 to 242 (VMILNE) and histidine 259. The A to I editase domain maps to 370 to 737 (SVSTGTKCIN…VEKPTEQDQF (368 aa)). Zn(2+) is bound at residue histidine 394. Residue glutamate 396 is the Proton donor of the active site. 1D-myo-inositol hexakisphosphate is bound by residues arginine 400 and arginine 401. Cysteine 451 is a Zn(2+) binding site. Residues 486 to 518 (RPPGLLSDPSTSTFQGAGTTEPADRHPNRKARG) form a disordered region. The span at 493-503 (DPSTSTFQGAG) shows a compositional bias: polar residues. Cysteine 556 contributes to the Zn(2+) binding site. 1D-myo-inositol hexakisphosphate contacts are provided by lysine 559, arginine 562, lysine 669, lysine 702, lysine 712, and lysine 730.

In terms of assembly, homodimer. Homodimerization is essential for its catalytic activity. Can form heterodimers with isoform 5 of ADAR/ADAR1. 1D-myo-inositol hexakisphosphate is required as a cofactor. As to expression, highly expressed in brain and heart and at lower levels in placenta. Fair expression in lung, liver and kidney. Detected in brain, heart, kidney, lung and liver (at protein level). Highly expressed in hippocampus and colon. Expressed in pediatric astrocytomas and the protein has a decreased RNA-editing activity. The decrease in RNA editing correlates with the grade of malignancy of the tumors, with the high grade tumors showing lower editing is seen.

The protein resides in the nucleus. It localises to the nucleolus. The enzyme catalyses adenosine in double-stranded RNA + H2O + H(+) = inosine in double-stranded RNA + NH4(+). Catalyzes the hydrolytic deamination of adenosine to inosine in double-stranded RNA (dsRNA) referred to as A-to-I RNA editing. This may affect gene expression and function in a number of ways that include mRNA translation by changing codons and hence the amino acid sequence of proteins; pre-mRNA splicing by altering splice site recognition sequences; RNA stability by changing sequences involved in nuclease recognition; genetic stability in the case of RNA virus genomes by changing sequences during viral RNA replication; and RNA structure-dependent activities such as microRNA production or targeting or protein-RNA interactions. Can edit both viral and cellular RNAs and can edit RNAs at multiple sites (hyper-editing) or at specific sites (site-specific editing). Its cellular RNA substrates include: bladder cancer-associated protein (BLCAP), neurotransmitter receptors for glutamate (GRIA2 and GRIK2) and serotonin (HTR2C), GABA receptor (GABRA3) and potassium voltage-gated channel (KCNA1). Site-specific RNA editing of transcripts encoding these proteins results in amino acid substitutions which consequently alter their functional activities. Edits GRIA2 at both the Q/R and R/G sites efficiently but converts the adenosine in hotspot1 much less efficiently. Can exert a proviral effect towards human immunodeficiency virus type 1 (HIV-1) and enhances its replication via both an editing-dependent and editing-independent mechanism. The former involves editing of adenosines in the 5'UTR while the latter occurs via suppression of EIF2AK2/PKR activation and function. Can inhibit cell proliferation and migration and can stimulate exocytosis. In terms of biological role, has a lower catalytic activity than isoform 2. Functionally, has a higher catalytic activity than isoform 1. The protein is Double-stranded RNA-specific editase 1 of Homo sapiens (Human).